The following is a 133-amino-acid chain: Small ribosomal subunit protein uS9 (133 aa).

The segment covering Arg98–Ala113 has biased composition (basic and acidic residues). Positions Arg98–Arg133 are disordered. Residues Lys114–Arg133 are compositionally biased toward basic residues.

The protein belongs to the universal ribosomal protein uS9 family.

This Parasynechococcus marenigrum (strain WH8102) protein is Small ribosomal subunit protein uS9.